A 1704-amino-acid polypeptide reads, in one-letter code: ABC transporter ced-7 (1704 aa).

A helical membrane pass occupies residues 23–43 (VWTLFELIIPCLLLGPLVYLV). N-linked (GlcNAc...) asparagine glycosylation is found at N126 and N145. 3 consecutive transmembrane segments (helical) span residues 256-276 (AFIDFFPFIWAFVTFINVIHI), 306-326 (VVMAFLKFFVIFLCSIIPLTF), and 334-354 (AALIVTVLMYGLGAVIFGAFV). A glycan (N-linked (GlcNAc...) asparagine) is linked at N359. A run of 2 helical transmembrane segments spans residues 362 to 382 (NSAIKAILVAWGAMIGISYKL) and 389 to 409 (ISSCFLYGLNINGAFALAVEA). 2 N-linked (GlcNAc...) asparagine glycosylation sites follow: N421 and N427. The chain crosses the membrane as a helical span at residues 436–456 (GWALVMMIVDILWMSIGALVV). N-linked (GlcNAc...) asparagine glycosylation occurs at N481. Positions 511 to 536 (NPMASTSLNPPNADSDSLLEGSTEAD) are disordered. Over residues 512-525 (PMASTSLNPPNADS) the composition is skewed to polar residues. Residues 546–777 (IIVRNLVKIW…FGTGYLLTVV (232 aa)) form the ABC transporter 1 domain. 580–587 (GHNGAGKS) provides a ligand contact to ATP. N-linked (GlcNAc...) asparagine glycosylation is found at N678, N727, and N899. Composition is skewed to polar residues over residues 888–902 (RQNSRISHNSRNASE) and 911–921 (DTQSSTKSADS). A disordered region spans residues 888-933 (RQNSRISHNSRNASEPSLKPAGYDTQSSTKSADSYQKLMDSQARGP). The helical transmembrane segment at 963–983 (LFTQVLIPIILLGLVGSLTTL) threads the bilayer. N-linked (GlcNAc...) asparagine glycans are attached at residues N986, N1012, and N1045. 7 consecutive transmembrane segments (helical) span residues 1126–1146 (LAPMLILIFAMVTSTFVMFLI), 1153–1173 (FAHQQFLTGISPITFYSASLI), 1176–1196 (GILYSLICLIFLFMFLAFHWM), 1201–1221 (AIVILFWFLYFFSSVPFIYAV), 1234–1254 (LLIIWQVVISGAALLAVFLIF), 1266–1286 (ILVNIFMFLLPSYAFGSAIIT), and 1311–1331 (LMGTFGVCSFALFVLLQFKFV). The ABC transporter 2 domain maps to 1379-1603 (LVIKDLTKTF…YGNNYTMTLS (225 aa)). 1411-1418 (GVNGAGKT) contacts ATP. N1597 and N1632 each carry an N-linked (GlcNAc...) asparagine glycan.

Belongs to the ABC transporter superfamily. ABCA family. In terms of tissue distribution, ubiquitous in embryos. Expressed in larval germline precursors. Expression in larvae and adults is seen in amphid sheath cells, pharyngeal-intestinal valve and phasmid sheath cells. Low levels of expression are also seen in gonadal sheath cells.

It localises to the membrane. In terms of biological role, functions in the engulfment of cell corpses during embryonic programmed cell death to translocate molecules that mediate homotypic adhesion between cell surfaces of the dying and engulfing cells. This Caenorhabditis elegans protein is ABC transporter ced-7 (ced-7).